The following is a 227-amino-acid chain: Exodeoxyribonuclease (227 aa).

It carries out the reaction Exonucleolytic cleavage in the 3'- to 5'-direction to yield nucleoside 5'-phosphates.. 3'-5' exonuclease that preferentially uses ssDNA as substrate. Plays a role in group I intron homing. May play a role in the final step of host DNA degradation, by scavenging DNA into mononucleotides. In Escherichia coli (Bacteriophage T4), this protein is Exodeoxyribonuclease (dexA).